The chain runs to 582 residues: MHNDKDLSTWQTFRRLWPTIAPFKAGLIVAGIALILNAASDTFMLSLLKPLLDDGFGKTDRSVLLWMPLVVIGLMILRGITSYISSYCISWVSGKVVMTMRRRLFGHMMGMPVAFFDKQSTGTLLSRITYDSEQVASSSSGALITVVREGASIIGLFIMMFYYSWQLSIILVVLAPIVSIAIRVVSKRFRSISKNMQNTMGQVTTSAEQMLKGHKEVLIFGGQEVETKRFDKVSNKMRLQGMKMVSASSISDPIIQLIASLALAFVLYAASFPSVMDSLTAGTITVVFSSMIALMRPLKSLTNVNAQFQRGMAACQTLFAILDSEQEKDEGKRVIDRATGDLEFRNVTFTYPGREVPALRNINLKIPAGKTVALVGRSGSGKSTIASLITRFYDIDEGHILMDGHDLREYTLASLRNQVALVSQNVHLFNDTVANNIAYARTEEYSREQIEEAARMAYAMDFINKMDNGLDTIIGENGVLLSGGQRQRIAIARALLRDSPILILDEATSALDTESERAIQAALDELQKNRTSLVIAHRLSTIEQADEIVVVEDGIIVERGTHSELLAQHGVYAQLHKMQFGQ.

The next 5 membrane-spanning stretches (helical) occupy residues 16–36, 64–84, 153–173, 253–273, and 275–295; these read LWPTIAPFKAGLIVAGIALIL, LLWMPLVVIGLMILRGITSYI, IIGLFIMMFYYSWQLSIILVV, PIIQLIASLALAFVLYAASFP, and VMDSLTAGTITVVFSSMIALM. Positions 28–310 constitute an ABC transmembrane type-1 domain; that stretch reads IVAGIALILN…LTNVNAQFQR (283 aa). The region spanning 342 to 578 is the ABC transporter domain; sequence LEFRNVTFTY…HGVYAQLHKM (237 aa). 376–383 is an ATP binding site; that stretch reads GRSGSGKS.

The protein belongs to the ABC transporter superfamily. Lipid exporter (TC 3.A.1.106) family. In terms of assembly, homodimer.

It localises to the cell inner membrane. It carries out the reaction ATP + H2O + lipid A-core oligosaccharideSide 1 = ADP + phosphate + lipid A-core oligosaccharideSide 2.. In terms of biological role, involved in lipopolysaccharide (LPS) biosynthesis. Translocates lipid A-core from the inner to the outer leaflet of the inner membrane. Transmembrane domains (TMD) form a pore in the inner membrane and the ATP-binding domain (NBD) is responsible for energy generation. This is ATP-dependent lipid A-core flippase from Salmonella choleraesuis (strain SC-B67).